We begin with the raw amino-acid sequence, 135 residues long: Small ribosomal subunit protein uS12 (135 aa).

Asp-89 carries the 3-methylthioaspartic acid modification. The segment at 108–135 is disordered; it reads NKRTVSRSKYGTKKAKATDKKATDNKKK. Residues 111 to 122 show a composition bias toward basic residues; the sequence is TVSRSKYGTKKA. The segment covering 123–135 has biased composition (basic and acidic residues); the sequence is KATDKKATDNKKK.

It belongs to the universal ribosomal protein uS12 family. As to quaternary structure, part of the 30S ribosomal subunit. Contacts proteins S8 and S17. May interact with IF1 in the 30S initiation complex.

Functionally, with S4 and S5 plays an important role in translational accuracy. Its function is as follows. Interacts with and stabilizes bases of the 16S rRNA that are involved in tRNA selection in the A site and with the mRNA backbone. Located at the interface of the 30S and 50S subunits, it traverses the body of the 30S subunit contacting proteins on the other side and probably holding the rRNA structure together. The combined cluster of proteins S8, S12 and S17 appears to hold together the shoulder and platform of the 30S subunit. This chain is Small ribosomal subunit protein uS12, found in Helicobacter pylori (strain P12).